The chain runs to 268 residues: Ribosomal RNA small subunit methyltransferase A (268 aa).

Asn18, Leu20, Gly45, Glu66, Asp91, and Asn112 together coordinate S-adenosyl-L-methionine.

It belongs to the class I-like SAM-binding methyltransferase superfamily. rRNA adenine N(6)-methyltransferase family. RsmA subfamily.

The protein localises to the cytoplasm. It carries out the reaction adenosine(1518)/adenosine(1519) in 16S rRNA + 4 S-adenosyl-L-methionine = N(6)-dimethyladenosine(1518)/N(6)-dimethyladenosine(1519) in 16S rRNA + 4 S-adenosyl-L-homocysteine + 4 H(+). In terms of biological role, specifically dimethylates two adjacent adenosines (A1518 and A1519) in the loop of a conserved hairpin near the 3'-end of 16S rRNA in the 30S particle. May play a critical role in biogenesis of 30S subunits. The chain is Ribosomal RNA small subunit methyltransferase A from Shewanella frigidimarina (strain NCIMB 400).